The chain runs to 309 residues: Myristoylated alanine-rich C-kinase substrate (309 aa).

The disordered stretch occupies residues 1–309 (MGAQFSKTAA…PEAPPAPTAE (309 aa)). Gly2 is lipidated: N-myristoyl glycine. A Phosphothreonine modification is found at Thr15. Phosphoserine occurs at positions 26, 27, 29, 46, 63, and 74. Polar residues predominate over residues 26 to 35 (SSPSKANGQE). Composition is skewed to low complexity over residues 73 to 82 (ASGSAATPAA), 89 to 98 (AAATEPGAGA), and 109 to 142 (AEPS…PSSE). A Phosphothreonine modification is found at Thr79. Ser113 is subject to Phosphoserine; by MAPK. A phosphoserine mark is found at Ser122, Ser128, Ser138, Ser140, and Ser141. Residue Thr143 is modified to Phosphothreonine. A compositionally biased stretch (basic residues) spans 145–157 (KKKKKRFSFKKSF). Residues 145-169 (KKKKKRFSFKKSFKLSGFSFKKSKK) are calmodulin-binding (PSD). A phosphoserine; by PKC mark is found at Ser152 and Ser156. Position 160 is a phosphoserine (Ser160). Phosphoserine; by PKC is present on Ser163. Lys165 is subject to N6-acetyllysine. The residue at position 171 (Ser171) is a Phosphoserine. Low complexity predominate over residues 190–203 (AAAAGGEGAAAPGE). Residues 204–215 (QAGGAGAEGAAG) show a composition bias toward gly residues. Ser246 is subject to Phosphoserine. Low complexity predominate over residues 256–290 (PAPGATAGDASSAAGPEQEAPAATDEAAASAAPAA). Ser291 bears the Phosphoserine mark. Pro residues predominate over residues 291–309 (SPEPQPECSPEAPPAPTAE).

The protein belongs to the MARCKS family. In terms of assembly, interacts with CDC42. Interacts with GTP-bound form of RAB10. Interacts with calmodulin/CALM1. Acetylated at Lys-165 by KAT5; acetylation is required for its subsequent phosphorylation. Deacetylated by SIRT2. In terms of processing, phosphorylation by PKC displaces MARCKS from the membrane. It also inhibits the F-actin cross-linking activity. PKC-mediated phosphorylation increases 4 to 5-fold upon TNF-alpha or LPS induction. Post-translationally, myristoylated. A proper myristoylation is essential for the proper distribution to the plasma membrane. Phosphorylation by PKC displaces MARCKS from the membrane. It also inhibits the F-actin cross-linking activity. In terms of tissue distribution, brain, spleen, less in kidney and heart, and very low levels in liver.

It is found in the cell membrane. The protein localises to the cytoplasm. It localises to the cytoskeleton. In terms of biological role, membrane-associated protein that plays a role in the structural modulation of the actin cytoskeleton, chemotaxis, motility, cell adhesion, phagocytosis, and exocytosis through lipid sequestering and/or protein docking to membranes. Thus, exerts an influence on a plethora of physiological processes, such as embryonic development, tissue regeneration, neuronal plasticity, and inflammation. Sequesters phosphatidylinositol 4,5-bisphosphate (PIP2) at lipid rafts in the plasma membrane of quiescent cells, an action reversed by protein kinase C, ultimately inhibiting exocytosis. During inflammation, promotes the migration of inflammatory cells and the secretion of cytokines such as tumor necrosis factor (TNF), particularly in macrophages. Plays an essential role in bacteria-induced intracellular reactive oxygen species (ROS) formation in the monocytic cell type. Participates in the regulation of neurite initiation and outgrowth by interacting with components of cellular machinery including CDC42 that regulates cell shape and process extension through modulation of the cytoskeleton. Also plays a role in axon development by mediating docking and fusion of RAB10-positive vesicles with the plasma membrane. This chain is Myristoylated alanine-rich C-kinase substrate (Marcks), found in Mus musculus (Mouse).